A 325-amino-acid chain; its full sequence is Phosphatidylglycerol--prolipoprotein diacylglyceryl transferase (325 aa).

4 helical membrane passes run 19-39 (IPLRGYAFCIIIGVFVAVWFG), 47-67 (GGKAGTVADVAVWAVPFGLVG), 93-113 (IWEGGLGIWGAIAFGAVGAWI), and 119-139 (GIPLPAWADALAPGIAIAQAI). Arg-141 is a binding site for a 1,2-diacyl-sn-glycero-3-phospho-(1'-sn-glycerol). 3 helical membrane-spanning segments follow: residues 175–195 (HPTFLYESLWCIGVALLVIWA), 207–225 (FALYVAGYCAGRGWIEYMR), and 237–257 (LNVWTAIVVFILAVVYIVISA). Basic and acidic residues predominate over residues 266–312 (IVEPDRDATPAEKDGSGEDGSGEKGVAKADAAAKDPLTKDEPGKDAT). A disordered region spans residues 266-325 (IVEPDRDATPAEKDGSGEDGSGEKGVAKADAAAKDPLTKDEPGKDATAENAGAAGAAEKA). Residues 313–325 (AENAGAAGAAEKA) are compositionally biased toward low complexity.

This sequence belongs to the Lgt family.

It is found in the cell membrane. The catalysed reaction is L-cysteinyl-[prolipoprotein] + a 1,2-diacyl-sn-glycero-3-phospho-(1'-sn-glycerol) = an S-1,2-diacyl-sn-glyceryl-L-cysteinyl-[prolipoprotein] + sn-glycerol 1-phosphate + H(+). It functions in the pathway protein modification; lipoprotein biosynthesis (diacylglyceryl transfer). Catalyzes the transfer of the diacylglyceryl group from phosphatidylglycerol to the sulfhydryl group of the N-terminal cysteine of a prolipoprotein, the first step in the formation of mature lipoproteins. This is Phosphatidylglycerol--prolipoprotein diacylglyceryl transferase from Streptomyces griseus subsp. griseus (strain JCM 4626 / CBS 651.72 / NBRC 13350 / KCC S-0626 / ISP 5235).